We begin with the raw amino-acid sequence, 24 residues long: Defensin D5 (24 aa).

It belongs to the DEFL family. Group IV subfamily. As to expression, distributed in the epidermal cell layer of leaves and in the subepidermal layer region of stems. Not in roots.

The protein resides in the secreted. It localises to the cell wall. Its function is as follows. Antimicrobial peptide. Active against Fusarium spp., Gram-positive and Gram-negative bacterial pathogens. The polypeptide is Defensin D5 (Spinacia oleracea (Spinach)).